Here is a 476-residue protein sequence, read N- to C-terminus: Aspartyl/glutamyl-tRNA(Asn/Gln) amidotransferase subunit B (476 aa).

This sequence belongs to the GatB/GatE family. GatB subfamily. Heterotrimer of A, B and C subunits.

It carries out the reaction L-glutamyl-tRNA(Gln) + L-glutamine + ATP + H2O = L-glutaminyl-tRNA(Gln) + L-glutamate + ADP + phosphate + H(+). The enzyme catalyses L-aspartyl-tRNA(Asn) + L-glutamine + ATP + H2O = L-asparaginyl-tRNA(Asn) + L-glutamate + ADP + phosphate + 2 H(+). Functionally, allows the formation of correctly charged Asn-tRNA(Asn) or Gln-tRNA(Gln) through the transamidation of misacylated Asp-tRNA(Asn) or Glu-tRNA(Gln) in organisms which lack either or both of asparaginyl-tRNA or glutaminyl-tRNA synthetases. The reaction takes place in the presence of glutamine and ATP through an activated phospho-Asp-tRNA(Asn) or phospho-Glu-tRNA(Gln). This is Aspartyl/glutamyl-tRNA(Asn/Gln) amidotransferase subunit B from Albidiferax ferrireducens (strain ATCC BAA-621 / DSM 15236 / T118) (Rhodoferax ferrireducens).